Here is a 488-residue protein sequence, read N- to C-terminus: UDP-N-acetylmuramate--L-alanine ligase (488 aa).

122 to 128 (GTHGKTT) lines the ATP pocket.

The protein belongs to the MurCDEF family.

The protein resides in the cytoplasm. It catalyses the reaction UDP-N-acetyl-alpha-D-muramate + L-alanine + ATP = UDP-N-acetyl-alpha-D-muramoyl-L-alanine + ADP + phosphate + H(+). It functions in the pathway cell wall biogenesis; peptidoglycan biosynthesis. Functionally, cell wall formation. This Mycobacterium marinum (strain ATCC BAA-535 / M) protein is UDP-N-acetylmuramate--L-alanine ligase.